Consider the following 423-residue polypeptide: COP9 signalosome complex subunit 3 (423 aa).

One can recognise a PCI domain in the interval 197–365; the sequence is NFERALYFYE…GMVCFHDNPE (169 aa). The interval 402–423 is disordered; the sequence is QFVQKSMGSQEDDSGTKPSSYS.

Belongs to the CSN3 family. Component of the CSN complex, probably composed of COPS1, COPS2, COPS3, COPS4, COPS5, COPS6, COPS7, COPS8 and COPS9.

The protein resides in the cytoplasm. The protein localises to the nucleus. In terms of biological role, component of the COP9 signalosome complex (CSN), a complex involved in various cellular and developmental processes. The CSN complex is an essential regulator of the ubiquitin (Ubl) conjugation pathway by mediating the deneddylation of the cullin subunits of E3 ligase complexes, leading to modify the Ubl ligase activity. The polypeptide is COP9 signalosome complex subunit 3 (COPS3) (Gallus gallus (Chicken)).